The sequence spans 624 residues: Phosphomethylpyrimidine synthase (624 aa).

Substrate contacts are provided by residues Asn231, Met260, Tyr289, His325, 345–347, 386–389, and Glu425; these read SRG and DGLR. His429 is a binding site for Zn(2+). Tyr452 contacts substrate. His493 is a binding site for Zn(2+). [4Fe-4S] cluster-binding residues include Cys573, Cys576, and Cys581.

The protein belongs to the ThiC family. As to quaternary structure, homodimer. The cofactor is [4Fe-4S] cluster.

It carries out the reaction 5-amino-1-(5-phospho-beta-D-ribosyl)imidazole + S-adenosyl-L-methionine = 4-amino-2-methyl-5-(phosphooxymethyl)pyrimidine + CO + 5'-deoxyadenosine + formate + L-methionine + 3 H(+). The protein operates within cofactor biosynthesis; thiamine diphosphate biosynthesis. Catalyzes the synthesis of the hydroxymethylpyrimidine phosphate (HMP-P) moiety of thiamine from aminoimidazole ribotide (AIR) in a radical S-adenosyl-L-methionine (SAM)-dependent reaction. The chain is Phosphomethylpyrimidine synthase from Myxococcus xanthus (strain DK1622).